A 101-amino-acid chain; its full sequence is MDKSKRPFLKFKRSFRRRLPPIQSGDRIDYRNMSLISRFISEQGKILSRRVNRLTLKQQRLITLAIKQARILSLLPFLNNEKQFERTESTARTTGFKARNK.

Belongs to the bacterial ribosomal protein bS18 family. Part of the 30S ribosomal subunit.

It is found in the plastid. The protein resides in the chloroplast. In Solanum bulbocastanum (Wild potato), this protein is Small ribosomal subunit protein bS18c.